The primary structure comprises 156 residues: Small ribosomal subunit protein uS7 (156 aa).

It belongs to the universal ribosomal protein uS7 family. Part of the 30S ribosomal subunit. Contacts proteins S9 and S11.

Its function is as follows. One of the primary rRNA binding proteins, it binds directly to 16S rRNA where it nucleates assembly of the head domain of the 30S subunit. Is located at the subunit interface close to the decoding center, probably blocks exit of the E-site tRNA. In Phytoplasma mali (strain AT), this protein is Small ribosomal subunit protein uS7.